Reading from the N-terminus, the 39-residue chain is Photosystem II reaction center protein L (39 aa).

Residues 18–38 traverse the membrane as a helical segment; that stretch reads SLYLGLLFVFVTGVLMSSYFF.

The protein belongs to the PsbL family. PSII is composed of 1 copy each of membrane proteins PsbA, PsbB, PsbC, PsbD, PsbE, PsbF, PsbH, PsbI, PsbJ, PsbK, PsbL, PsbM, PsbT, PsbX, PsbY, PsbZ, Psb30/Ycf12, peripheral proteins PsbO, CyanoQ (PsbQ), PsbU, PsbV and a large number of cofactors. It forms dimeric complexes.

It is found in the cellular thylakoid membrane. Functionally, one of the components of the core complex of photosystem II (PSII). PSII is a light-driven water:plastoquinone oxidoreductase that uses light energy to abstract electrons from H(2)O, generating O(2) and a proton gradient subsequently used for ATP formation. It consists of a core antenna complex that captures photons, and an electron transfer chain that converts photonic excitation into a charge separation. This subunit is found at the monomer-monomer interface and is required for correct PSII assembly and/or dimerization. The chain is Photosystem II reaction center protein L from Parasynechococcus marenigrum (strain WH8102).